The sequence spans 701 residues: Polyribonucleotide nucleotidyltransferase (701 aa).

Mg(2+) contacts are provided by Asp487 and Asp493. In terms of domain architecture, KH spans 554–613; it reads PTMIAMKIDTDKIRDVIGKGGATIRAICEETKASIDIEDDGSIKIFGETKEAAEAAKQRI. The S1 motif domain occupies 623–691; the sequence is GKIYVGKVER…NRGRIKLSIK (69 aa).

This sequence belongs to the polyribonucleotide nucleotidyltransferase family. Component of the RNA degradosome, which is a multiprotein complex involved in RNA processing and mRNA degradation. The cofactor is Mg(2+).

Its subcellular location is the cytoplasm. The enzyme catalyses RNA(n+1) + phosphate = RNA(n) + a ribonucleoside 5'-diphosphate. Functionally, involved in mRNA degradation. Catalyzes the phosphorolysis of single-stranded polyribonucleotides processively in the 3'- to 5'-direction. This Pseudomonas putida (strain GB-1) protein is Polyribonucleotide nucleotidyltransferase.